Consider the following 450-residue polypeptide: 6-phospho-beta-glucosidase (450 aa).

NAD(+) is bound at residue leucine 5–aspartate 73. Residues arginine 96 and asparagine 150 each coordinate substrate. Residues cysteine 172 and histidine 203 each coordinate Mn(2+). Tyrosine 258 functions as the Proton acceptor in the catalytic mechanism.

As to quaternary structure, homotetramer. Requires NAD(+) as cofactor. Mn(2+) serves as cofactor. The cofactor is Co(2+). It depends on Ni(2+) as a cofactor.

It carries out the reaction 6-phospho-beta-D-glucosyl-(1-&gt;4)-D-glucose + H2O = D-glucose 6-phosphate + D-glucose. Functionally, hydrolyzes a wide variety of P-beta-glucosides including cellobiose-6P, salicin-6P, arbutin-6P, gentiobiose-6P, methyl-beta-glucoside-6P and p-nitrophenyl-beta-D-glucopyranoside-6P. Is also able to hydrolyze phospho-N,N'-diacetylchitobiose. In Escherichia coli (strain K12), this protein is 6-phospho-beta-glucosidase (chbF).